A 703-amino-acid polypeptide reads, in one-letter code: Polyribonucleotide nucleotidyltransferase (703 aa).

Mg(2+) is bound by residues aspartate 488 and aspartate 494. The region spanning 555-614 is the KH domain; the sequence is PKIVKMQINPDKIKDVIGPGGKIITKIIDETGVKIDIEQTGEVFISGIEIDMIKKAQELI. Residues 624–692 form the S1 motif domain; the sequence is GKTYKGKVSR…EKGRVNLSRK (69 aa).

The protein belongs to the polyribonucleotide nucleotidyltransferase family. Mg(2+) serves as cofactor.

The protein localises to the cytoplasm. The catalysed reaction is RNA(n+1) + phosphate = RNA(n) + a ribonucleoside 5'-diphosphate. In terms of biological role, involved in mRNA degradation. Catalyzes the phosphorolysis of single-stranded polyribonucleotides processively in the 3'- to 5'-direction. This chain is Polyribonucleotide nucleotidyltransferase, found in Clostridioides difficile (strain 630) (Peptoclostridium difficile).